The primary structure comprises 347 residues: GMP reductase (347 aa).

Residue 108–131 (ADFEKTQQILSQNPQLNFVCIDVA) participates in NADP(+) binding. Positions 181 and 183 each coordinate K(+). Residue Cys-186 is the Thioimidate intermediate of the active site. 216 to 239 (IISDGGCTMPGDVAKAFGGGADFV) provides a ligand contact to NADP(+).

It belongs to the IMPDH/GMPR family. GuaC type 1 subfamily. As to quaternary structure, homotetramer.

The catalysed reaction is IMP + NH4(+) + NADP(+) = GMP + NADPH + 2 H(+). Functionally, catalyzes the irreversible NADPH-dependent deamination of GMP to IMP. It functions in the conversion of nucleobase, nucleoside and nucleotide derivatives of G to A nucleotides, and in maintaining the intracellular balance of A and G nucleotides. In Klebsiella pneumoniae subsp. pneumoniae (strain ATCC 700721 / MGH 78578), this protein is GMP reductase.